Consider the following 285-residue polypeptide: 2-dehydro-3-deoxyphosphooctonate aldolase (285 aa).

Belongs to the KdsA family.

It is found in the cytoplasm. The catalysed reaction is D-arabinose 5-phosphate + phosphoenolpyruvate + H2O = 3-deoxy-alpha-D-manno-2-octulosonate-8-phosphate + phosphate. The protein operates within carbohydrate biosynthesis; 3-deoxy-D-manno-octulosonate biosynthesis; 3-deoxy-D-manno-octulosonate from D-ribulose 5-phosphate: step 2/3. Its pathway is bacterial outer membrane biogenesis; lipopolysaccharide biosynthesis. The chain is 2-dehydro-3-deoxyphosphooctonate aldolase from Paracidovorax citrulli (strain AAC00-1) (Acidovorax citrulli).